The primary structure comprises 79 residues: uncharacterized protein (79 aa).

The 51-residue stretch at 10–60 (EAVLTMDSKGQILLPKELRERAGLKAGDRLVAIAGCDENEEVCCLILVKAE) folds into the SpoVT-AbrB domain.

This is an uncharacterized protein from Archaeoglobus fulgidus (strain ATCC 49558 / DSM 4304 / JCM 9628 / NBRC 100126 / VC-16).